A 98-amino-acid polypeptide reads, in one-letter code: Small ribosomal subunit protein bS20 (98 aa).

Belongs to the bacterial ribosomal protein bS20 family.

Functionally, binds directly to 16S ribosomal RNA. The chain is Small ribosomal subunit protein bS20 from Parasynechococcus marenigrum (strain WH8102).